The chain runs to 113 residues: Carboxysome shell protein CcmK4 (113 aa).

The 87-residue stretch at 5–91 folds into the BMC domain; it reads AIGSLETKGF…PHENVEAVFP (87 aa).

This sequence belongs to the bacterial microcompartments protein family. CcmK subfamily. As to quaternary structure, homohexamer. Interacts stably with CcmK3, probably forms heterohexamers with a 1:2 CcmK3:CcmK4 stoichiometry.

The protein localises to the carboxysome. Its function is as follows. One of the shell proteins of the carboxysome, a polyhedral inclusion where RuBisCO (ribulose bisphosphate carboxylase, rbcL-rbcS) is sequestered. Assembles into hexamers which make sheets that form the facets of the polyhedral carboxysome. The hexamer central pore probably regulates metabolite flux. A minor shell protein of the carboxysome, a polyhedral inclusion where RuBisCO (ribulose bisphosphate carboxylase, rbcL-rbcS) is sequestered. Hexamers form sheets that form the facets of the polyhedral carboxysome. The shell is 4.5 nm thick, as observed for CcmK proteins. In PCC 7942 there are several CcmK paralogs with presumably functional differences; replacing the central pore residues (34-37) with those of CcmK2 from this organism (Tyr-Glu-Lys-Ile) allows the bacterium to make carboxysomes, but the expression level is too low to know if the carboxysome is functional for CO(2) fixation. This subunit probably makes both homohexamers and heterohexamers with CcmK3. The CcmK3-CcmK4 heterohexmers have been suggested to cap other hexamers, perhaps to alter metabolite flux. The protein is Carboxysome shell protein CcmK4 of Synechococcus elongatus (strain ATCC 33912 / PCC 7942 / FACHB-805) (Anacystis nidulans R2).